We begin with the raw amino-acid sequence, 312 residues long: Ribosomal RNA small subunit methyltransferase H (312 aa).

Residues 35-37, Asp-54, Phe-81, Asp-100, and Gln-107 contribute to the S-adenosyl-L-methionine site; that span reads GGH.

Belongs to the methyltransferase superfamily. RsmH family.

Its subcellular location is the cytoplasm. The catalysed reaction is cytidine(1402) in 16S rRNA + S-adenosyl-L-methionine = N(4)-methylcytidine(1402) in 16S rRNA + S-adenosyl-L-homocysteine + H(+). Functionally, specifically methylates the N4 position of cytidine in position 1402 (C1402) of 16S rRNA. The chain is Ribosomal RNA small subunit methyltransferase H from Campylobacter jejuni subsp. jejuni serotype O:2 (strain ATCC 700819 / NCTC 11168).